The following is a 245-amino-acid chain: Aliphatic sulfonates import ATP-binding protein SsuB 1 (245 aa).

In terms of domain architecture, ABC transporter spans L9 to W227. G41–S48 is a binding site for ATP.

Belongs to the ABC transporter superfamily. Aliphatic sulfonates importer (TC 3.A.1.17.2) family. In terms of assembly, the complex is composed of two ATP-binding proteins (SsuB), two transmembrane proteins (SsuC) and a solute-binding protein (SsuA).

The protein resides in the cell membrane. The enzyme catalyses ATP + H2O + aliphatic sulfonate-[sulfonate-binding protein]Side 1 = ADP + phosphate + aliphatic sulfonateSide 2 + [sulfonate-binding protein]Side 1.. In terms of biological role, part of the ABC transporter complex SsuABC involved in aliphatic sulfonates import. Responsible for energy coupling to the transport system. The chain is Aliphatic sulfonates import ATP-binding protein SsuB 1 from Rhodococcus jostii (strain RHA1).